An 862-amino-acid polypeptide reads, in one-letter code: Autotaxin (862 aa).

An N-terminal signal peptide occupies residues 1–27 (MARQGCFGSYQVISLFTFAIGVNLCLG). Residues 28–35 (FTASRIKR) constitute a propeptide, removed by furin. A glycan (N-linked (GlcNAc...) asparagine) is linked at Asn-53. SMB domains lie at 54–97 (TSGS…LKTA) and 98–142 (RGWE…GESH). Intrachain disulfides connect Cys-58-Cys-75, Cys-62-Cys-93, Cys-73-Cys-86, Cys-79-Cys-85, Cys-102-Cys-119, Cys-107-Cys-137, Cys-117-Cys-130, Cys-123-Cys-129, Cys-148-Cys-194, and Cys-156-Cys-350. The Cell attachment site motif lies at 126–128 (RGD). A phosphodiesterase domain region spans residues 144 to 501 (VDDDCEEIRV…PTFKYRTKVP (358 aa)). Residues Asp-171 and Thr-209 each contribute to the Zn(2+) site. Thr-209 acts as the Nucleophile in catalysis. 1-(9Z-octadecenoyl)-sn-glycero-3-phosphate is bound by residues Thr-209, Asn-230, and Asp-311. The 1-hexadecanoyl-sn-glycero-3-phosphate site is built by Thr-209, Asn-230, and Asp-311. 1-tetradecanoyl-sn-glycerol 3-phosphate-binding residues include Thr-209, Asn-230, and Asp-311. Positions 311, 315, 358, and 359 each coordinate Zn(2+). 5 disulfide bridges follow: Cys-366-Cys-468, Cys-413-Cys-805, Cys-566-Cys-666, Cys-568-Cys-651, and Cys-774-Cys-784. Asn-410 is a glycosylation site (N-linked (GlcNAc...) asparagine). His-474 serves as a coordination point for Zn(2+). A 1-(9Z-octadecenoyl)-sn-glycero-3-phosphate-binding site is contributed by His-474. His-474 contacts 1-hexadecanoyl-sn-glycero-3-phosphate. 1-tetradecanoyl-sn-glycerol 3-phosphate is bound at residue His-474. A glycan (N-linked (GlcNAc...) asparagine) is linked at Asn-524. Positions 597–862 (LYGRPAVLYR…TYLHTYESEI (266 aa)) are nuclease-like domain. Asp-739, Asn-741, Asn-743, Leu-745, and Asp-747 together coordinate Ca(2+). Asn-806 carries an N-linked (GlcNAc...) asparagine glycan. The interval 829–850 (IEHLTGLDFYRKTSRSYSEILT) is required for secretion.

This sequence belongs to the nucleotide pyrophosphatase/phosphodiesterase family. It depends on Zn(2+) as a cofactor. Ca(2+) is required as a cofactor. N-glycosylation, but not furin-cleavage, plays a critical role on secretion and on lysoPLD activity. Secretion requires simultaneous glycosylation on Asn-53 and Asn-410, while probable glycosylation of Asn-410 has a preferential role on lysoPLD activity. Not O-glycosylated. Post-translationally, the interdomain disulfide bond between Cys-413 and Cys-805 is essential for catalytic activity. Expressed in brain and adipose tissue.

The protein resides in the secreted. It catalyses the reaction a 1-O-alkyl-sn-glycero-3-phosphoethanolamine + H2O = a 1-O-alkyl-sn-glycero-3-phosphate + ethanolamine + H(+). The catalysed reaction is a 1-acyl-sn-glycero-3-phosphoethanolamine + H2O = a 1-acyl-sn-glycero-3-phosphate + ethanolamine + H(+). It carries out the reaction 1-(9Z-octadecenoyl)-sn-glycero-3-phosphoethanolamine + H2O = 1-(9Z-octadecenoyl)-sn-glycero-3-phosphate + ethanolamine + H(+). The enzyme catalyses a 1-O-alkyl-sn-glycero-3-phosphocholine + H2O = a 1-O-alkyl-sn-glycero-3-phosphate + choline + H(+). It catalyses the reaction 1-O-(9Z-octadecenyl)-sn-glycero-3-phosphocholine + H2O = 1-O-(9Z-octadecenyl)-sn-glycero-3-phosphate + choline + H(+). The catalysed reaction is 1-O-hexadecyl-sn-glycero-3-phosphocholine + H2O = 1-O-hexadecyl-sn-glycero-3-phosphate + choline + H(+). It carries out the reaction a 1-O-(1Z-alkenyl)-sn-glycero-3-phosphocholine + H2O = a 1-O-(1Z-alkenyl)-sn-glycero-3-phosphate + choline + H(+). The enzyme catalyses a 1-acyl-sn-glycero-3-phosphocholine + H2O = a 1-acyl-sn-glycero-3-phosphate + choline + H(+). It catalyses the reaction 1-dodecanoyl-sn-glycero-3-phosphocholine + H2O = 1-dodecanoyl-sn-glycerol 3-phosphate + choline + H(+). The catalysed reaction is 1-(9Z-octadecenoyl)-sn-glycero-3-phosphocholine + H2O = 1-(9Z-octadecenoyl)-sn-glycero-3-phosphate + choline + H(+). It carries out the reaction 1-tetradecanoyl-sn-glycero-3-phosphocholine + H2O = 1-tetradecanoyl-sn-glycerol 3-phosphate + choline + H(+). The enzyme catalyses 1-decanoyl-sn-glycero-3-phosphocholine + H2O = 1-decanoyl-sn-glycero-3-phosphate + choline + H(+). It catalyses the reaction 1-octadecanoyl-sn-glycero-3-phosphocholine + H2O = 1-octadecanoyl-sn-glycero-3-phosphate + choline + H(+). The catalysed reaction is 1-hexadecanoyl-sn-glycero-3-phosphocholine + H2O = 1-hexadecanoyl-sn-glycero-3-phosphate + choline + H(+). It carries out the reaction 1-hexanoyl-sn-glycero-3-phosphocholine + H2O = 1-hexanoyl-sn-glycero-3-phosphate + choline + H(+). The enzyme catalyses 1-(9Z,12Z)-octadecadienoyl-sn-glycero-3-phosphocholine + H2O = 1-(9Z,12Z)-octadecadienoyl-sn-glycero-3-phosphate + choline + H(+). It catalyses the reaction sphing-4-enine-phosphocholine + H2O = sphing-4-enine 1-phosphate + choline + H(+). The catalysed reaction is 1-(5Z,8Z,11Z,14Z-eicosatetraenoyl)-sn-glycero-3-phosphocholine + H2O = 1-(5Z,8Z,11Z,14Z-eicosatetraenoyl)-sn-glycero-3-phosphate + choline + H(+). It carries out the reaction a 2-acyl-sn-glycero-3-phosphocholine + H2O = a 2-acyl-sn-glycerol 3-phosphate + choline + H(+). The enzyme catalyses a 1,2-diacyl-sn-glycero-3-phosphocholine + H2O = a 1,2-diacyl-sn-glycero-3-phosphate + choline + H(+). It catalyses the reaction 1,2-dioctanoyl-sn-glycero-3-phosphocholine + H2O = 1,2-dioctanoyl-sn-glycero-3-phosphate + choline + H(+). The catalysed reaction is 1,2-didecanoyl-sn-glycero-3-phosphocholine + H2O = 1,2-didecanoyl-sn-glycero-3-phosphate + choline + H(+). It carries out the reaction a 1-acyl-sn-glycero-3-phospho-L-serine + H2O = a 1-acyl-sn-glycero-3-phosphate + L-serine + H(+). The enzyme catalyses 1-(9Z-octadecenoyl)-sn-glycero-3-phospho-L-serine + H2O = 1-(9Z-octadecenoyl)-sn-glycero-3-phosphate + L-serine + H(+). It catalyses the reaction a 2-acyl-sn-glycero-3-phospho-L-serine + H2O = a 2-acyl-sn-glycerol 3-phosphate + L-serine + H(+). With respect to regulation, inhibited by EDTA and EGTA. Its function is as follows. Secreted lysophospholipase D that hydrolyzes lysophospholipids to produce the signaling molecule lysophosphatidic acid (LPA) in extracellular fluids. Its major substrate is lysophosphatidylcholine. Can also act on sphingosylphosphorylcholine producing sphingosine-1-phosphate, a modulator of cell motility. Can hydrolyze, in vitro, bis-pNPP, to some extent pNP-TMP, and barely ATP. Involved in several motility-related processes such as angiogenesis and neurite outgrowth. Acts as an angiogenic factor by stimulating migration of smooth muscle cells and microtubule formation. Stimulates migration of melanoma cells, probably via a pertussis toxin-sensitive G protein. May have a role in induction of parturition. Possible involvement in cell proliferation and adipose tissue development. Required for LPA production in activated platelets, cleaves the sn-1 lysophospholipids to generate sn-1 lysophosphatidic acids containing predominantly 18:2 and 20:4 fatty acids. Shows a preference for the sn-1 to the sn-2 isomer of 1-O-alkyl-sn-glycero-3-phosphocholine (lyso-PAF). In Mus musculus (Mouse), this protein is Autotaxin.